The chain runs to 406 residues: Imidazolonepropionase (406 aa).

Residues His72 and His74 each contribute to the Fe(3+) site. Residues His72 and His74 each contribute to the Zn(2+) site. Residues Arg81, Tyr144, and His177 each contribute to the 4-imidazolone-5-propanoate site. Tyr144 contributes to the N-formimidoyl-L-glutamate binding site. His242 contacts Fe(3+). His242 provides a ligand contact to Zn(2+). Gln245 contacts 4-imidazolone-5-propanoate. Asp317 provides a ligand contact to Fe(3+). Residue Asp317 coordinates Zn(2+). Positions 319 and 321 each coordinate N-formimidoyl-L-glutamate. Residue Thr322 participates in 4-imidazolone-5-propanoate binding.

The protein belongs to the metallo-dependent hydrolases superfamily. HutI family. Requires Zn(2+) as cofactor. Fe(3+) serves as cofactor.

It is found in the cytoplasm. It carries out the reaction 4-imidazolone-5-propanoate + H2O = N-formimidoyl-L-glutamate. It participates in amino-acid degradation; L-histidine degradation into L-glutamate; N-formimidoyl-L-glutamate from L-histidine: step 3/3. Its function is as follows. Catalyzes the hydrolytic cleavage of the carbon-nitrogen bond in imidazolone-5-propanoate to yield N-formimidoyl-L-glutamate. It is the third step in the universal histidine degradation pathway. This chain is Imidazolonepropionase, found in Yersinia pestis bv. Antiqua (strain Antiqua).